A 346-amino-acid chain; its full sequence is DNA-directed RNA polymerases I and III subunit RPAC1 (346 aa).

Ala2 carries the post-translational modification N-acetylalanine. Residue Ser4 is modified to Phosphoserine.

The protein belongs to the archaeal Rpo3/eukaryotic RPB3 RNA polymerase subunit family. As to quaternary structure, component of the RNA polymerase I and RNA polymerase III complexes consisting of at least 13 and 17 subunits, respectively. Pol I complex consists of a ten-subunit catalytic core composed of POLR1A/RPA1, POLR1B/RPA2, POLR1C/RPAC1, POLR1D/RPAC2, POLR1H/RPA12, POLR2E/RPABC1, POLR2F/RPABC2, POLR2H/RPABC3, POLR2K/RPABC4 and POLR2L/RPABC5; a mobile stalk subunit POLR1F/RPA43 protruding from the core and additional subunits homologous to general transcription factors POLR1E/RPA49 and POLR1G/RPA34. Part of Pol I pre-initiation complex (PIC), in which Pol I core assembles with RRN3 and promoter-bound UTBF and SL1/TIF-IB complex. Pol III complex consists of a ten-subunit catalytic core composed of POLR3A/RPC1, POLR3B/RPC2, POLR1C/RPAC1, POLR1D/RPAC2, POLR3K/RPC10, POLR2E/RPABC1, POLR2F/RPABC2, POLR2H/RPABC3, POLR2K/RPABC4 and POLR2L/RPABC5; a mobile stalk composed of two subunits POLR3H/RPC8 and CRCP/RPC9, protruding from the core and functioning primarily in transcription initiation; and additional subunits homologous to general transcription factors of the RNA polymerase II machinery, POLR3C/RPC3-POLR3F/RPC6-POLR3G/RPC7 heterotrimer required for transcription initiation and POLR3D/RPC4-POLR3E/RPC5 heterodimer involved in both transcription initiation and termination.

It is found in the nucleus. It localises to the nucleolus. Its subcellular location is the cytoplasm. The protein resides in the cytosol. In terms of biological role, DNA-dependent RNA polymerase catalyzes the transcription of DNA into RNA using the four ribonucleoside triphosphates as substrates. Common component of RNA polymerases I and III which synthesize ribosomal RNA precursors and short non-coding RNAs including 5S rRNA, snRNAs, tRNAs and miRNAs, respectively. POLR1C/RPAC1 is part of the polymerase core and may function as a clamp element that moves to open and close the cleft. This chain is DNA-directed RNA polymerases I and III subunit RPAC1, found in Homo sapiens (Human).